The chain runs to 329 residues: Sorting assembly machinery 35 kDa subunit (329 aa).

Component of the mitochondrial outer membrane sorting assembly machinery (SAM or TOB) complex, which at least consists of SAM35, SAM37 and SAM50.

Its subcellular location is the mitochondrion outer membrane. Functionally, essential component of the mitochondrial outer membrane sorting assembly machinery (SAM or TOB) complex, which is required for the sorting of proteins with complicated topology, such as beta-barrel proteins, to the mitochondrial outer membrane after import by the TOM complex. This Saccharomyces cerevisiae (strain ATCC 204508 / S288c) (Baker's yeast) protein is Sorting assembly machinery 35 kDa subunit (SAM35).